Here is a 147-residue protein sequence, read N- to C-terminus: Hemoglobin subunit beta-1 (147 aa).

One can recognise a Globin domain in the interval 3 to 147; it reads EWTATERTHI…VVSALGRQYH (145 aa). 2 residues coordinate heme b: His64 and His93.

It belongs to the globin family. As to quaternary structure, hb 1 is a heterotetramer of two alpha-1 and two beta-1 chains. Hb 2 is a heterotetramer of two alpha-2 and two beta-1 chains. As to expression, red blood cells.

Functionally, involved in oxygen transport from gills to the various peripheral tissues. This Boreogadus saida (Polar cod) protein is Hemoglobin subunit beta-1 (hbb1).